A 560-amino-acid polypeptide reads, in one-letter code: DNA ligase B (560 aa).

Residue lysine 124 is the N6-AMP-lysine intermediate of the active site.

This sequence belongs to the NAD-dependent DNA ligase family. LigB subfamily.

The catalysed reaction is NAD(+) + (deoxyribonucleotide)n-3'-hydroxyl + 5'-phospho-(deoxyribonucleotide)m = (deoxyribonucleotide)n+m + AMP + beta-nicotinamide D-nucleotide.. Functionally, catalyzes the formation of phosphodiester linkages between 5'-phosphoryl and 3'-hydroxyl groups in double-stranded DNA using NAD as a coenzyme and as the energy source for the reaction. The protein is DNA ligase B of Escherichia coli O6:H1 (strain CFT073 / ATCC 700928 / UPEC).